Consider the following 616-residue polypeptide: Zinc metalloproteinase-disintegrin-like VLAIP-A (616 aa).

The N-terminal stretch at 1–20 is a signal peptide; that stretch reads MMQVLLVTISLAVFPYQGSS. The propeptide occupies 21–194; sequence IILESGNVND…KASQLNLTPE (174 aa). Gln195 carries the post-translational modification Pyrrolidone carboxylic acid. A Peptidase M12B domain is found at 203-399; that stretch reads KYIKLVIVAD…KMPQCILNKP (197 aa). 3 disulfides stabilise this stretch: Cys314–Cys394, Cys354–Cys378, and Cys356–Cys361. His339 serves as a coordination point for Zn(2+). Glu340 is a catalytic residue. His343 and His349 together coordinate Zn(2+). Asn377 carries an N-linked (GlcNAc...) asparagine glycan. The region spanning 407–493 is the Disintegrin domain; it reads PAVCGNYLVE…ECPTDQFQRN (87 aa). Positions 409, 412, 414, 416, 419, and 422 each coordinate Ca(2+). 14 disulfides stabilise this stretch: Cys410–Cys439, Cys421–Cys434, Cys423–Cys429, Cys433–Cys456, Cys447–Cys453, Cys452–Cys478, Cys465–Cys485, Cys472–Cys504, Cys497–Cys509, Cys516–Cys566, Cys531–Cys577, Cys544–Cys554, Cys561–Cys603, and Cys597–Cys609. The D/ECD-tripeptide motif lies at 471-473; the sequence is ECD.

Belongs to the venom metalloproteinase (M12B) family. P-III subfamily. P-IIIc sub-subfamily. Heterodimer; disulfide-linked. Zn(2+) serves as cofactor. Post-translationally, the N-terminus is blocked. Expressed by the venom gland.

The protein resides in the secreted. Its activity is regulated as follows. Inhibited by EDTA or 1,10-phenanthroline. Not inhibited by PMSF. Snake venom zinc metalloprotease that hydrolyzes the alpha-chain (FGA) and more slowly the beta-chain (FGB) of fibrinogen, without affecting the gamma-chain. Cleaves alpha-chain of fibrinogen at '432-Lys-|-Leu-433' and '535-Pro-|-Met-536' bonds. Induces apoptosis in vascular endothelial cells and inhibits endothelial cell adhesion to extracellular matrix proteins such as fibrinogen, fibronectin, vitronectin, collagen I, and collagen IV. Also hydrolyzes azocasein, and insulin B-chain (at the '38-Ala-|-Leu-39' bond). The protein is Zinc metalloproteinase-disintegrin-like VLAIP-A of Macrovipera lebetinus (Levantine viper).